The following is a 64-amino-acid chain: MSEVINVNCPTCGKAVVWGEISPFRPFCCKRCQLIDLGEWAAEEKRIPSEGGLSDSDDWSEELK.

Zn(2+)-binding residues include Cys9, Cys12, Cys28, and Cys32.

This sequence belongs to the DNA gyrase inhibitor YacG family. In terms of assembly, interacts with GyrB. Zn(2+) serves as cofactor.

In terms of biological role, inhibits all the catalytic activities of DNA gyrase by preventing its interaction with DNA. Acts by binding directly to the C-terminal domain of GyrB, which probably disrupts DNA binding by the gyrase. The chain is DNA gyrase inhibitor YacG from Enterobacter sp. (strain 638).